The sequence spans 78 residues: Acyl carrier protein (78 aa).

In terms of domain architecture, Carrier spans 1–76 (MALFEDIQAV…DVVKYIEDNK (76 aa)). The residue at position 36 (S36) is an O-(pantetheine 4'-phosphoryl)serine.

The protein belongs to the acyl carrier protein (ACP) family. In terms of processing, 4'-phosphopantetheine is transferred from CoA to a specific serine of apo-ACP by AcpS. This modification is essential for activity because fatty acids are bound in thioester linkage to the sulfhydryl of the prosthetic group.

It is found in the cytoplasm. It functions in the pathway lipid metabolism; fatty acid biosynthesis. In terms of biological role, carrier of the growing fatty acid chain in fatty acid biosynthesis. This chain is Acyl carrier protein, found in Helicobacter acinonychis (strain Sheeba).